Reading from the N-terminus, the 367-residue chain is Germination protease (367 aa).

A propeptide spanning residues 1-15 is cleaved from the precursor; that stretch reads MKEPLDLSKYSVRTD.

The protein belongs to the peptidase A25 family. In terms of assembly, homotetramer. Autoproteolytically processed. The inactive tetrameric zymogen termed p46 autoprocesses to a smaller form termed p41, which is active only during spore germination.

The enzyme catalyses Endopeptidase action with P4 Glu or Asp, P1 preferably Glu &gt; Asp, P1' hydrophobic and P2' Ala.. Initiates the rapid degradation of small, acid-soluble proteins during spore germination. This chain is Germination protease, found in Bacillus cereus (strain AH187).